A 3418-amino-acid polypeptide reads, in one-letter code: Breast cancer type 2 susceptibility protein (3418 aa).

The segment at 1–40 (MPIGSKERPTFFEIFKTRCNKADLGPISLNWFEELSSEAP) is interaction with PALB2. Positions 37-68 (SEAPPYNSEPAEESEHKNNNYEPNLFKTPQRK) are disordered. Ser-70 bears the Phosphoserine mark. A disordered region spans residues 358–381 (VEPNDTDPLDSNVANQKPFESGSD). Phosphoserine is present on residues Ser-445, Ser-492, and Ser-755. Residues 639–1000 (LHSSVKRSCS…NKWAGLLGPI (362 aa)) form an interaction with NPM1 region. BRCA2 repeat units follow at residues 1002–1036 (NHSFGGSFRTASNKEIKLSEHNIKKSKMFFKDIEE), 1212–1246 (NEVGFRGFYSAHGTKLNVSTEALQKAVKLFSDIEN), 1421–1455 (FETSDTFFQTASGKNISVAKESFNKIVNFFDQKPE), 1517–1551 (KEPTLLGFHTASGKKVKIAKESLDKVKNLFDEKEQ), 1664–1698 (IENSALAFYTSCSRKTSVSQTSLLEAKKWLREGIF), and 1837–1871 (FEVGPPAFRIASGKIVCVSHETIKKVKDIFTDSFS). The interval 1003-2082 (HSFGGSFRTA…LHKVKGVLEE (1080 aa)) is interaction with RAD51. Residues 1338–1781 (GSDSSKNDTV…IEPVLKNVED (444 aa)) are interaction with POLH. The segment at 1410 to 1595 (TATKTEQNIK…TAAPKCKEMQ (186 aa)) is required for stimulation of POLH DNA polymerization activity. Phosphoserine is present on Ser-1970. Residues 1971–2005 (SANTCGIFSTASGKSVQVSDASLQNARQVFSEIED) form a BRCA2 7 repeat. At Thr-2035 the chain carries Phosphothreonine. Residues 2051-2085 (NSSAFSGFSTASGKQVSILESSLHKVKGVLEEFDL) form a BRCA2 8 repeat. Ser-2095 is subject to Phosphoserine. Residues 2270 to 2337 (GKRRGEPLIL…EPITCVPFRT (68 aa)) are interaction with HSF2BP. The interval 2350–2545 (TAPGQEFLSK…SHKQLYTYGV (196 aa)) is interaction with FANCD2. Residues 2430 to 2450 (ENRQKQNIDGHGSDDSKNKIN) are disordered. The tract at residues 2481–2832 (ITSLQNARDI…QRAYPIQWME (352 aa)) is interaction with SEM1. The short motif at 2682-2698 (AAKTLVLCVSDIISLSA) is the Nuclear export signal; masked by interaction with SEM1 element. Phosphoserine; by CDK1 and CDK2 is present on Ser-3291. Ser-3319 carries the post-translational modification Phosphoserine. Residue Thr-3387 is modified to Phosphothreonine; by CHEK1 and CHEK2. A disordered region spans residues 3393–3418 (EQESSQASTEECEKNKQDTITTKKYI).

Monomer and dimer. Interacts with RAD51; regulates RAD51 recruitment and function at sites of DNA repair. Interacts with WDR16, USP11, DMC1, ROCK2 and NPM1. Interacts with SEM1; the interaction masks a nuclear export signal in BRCA2. Interacts with both nonubiquitinated and monoubiquitinated FANCD2; this complex also includes XRCC3 and phosphorylated FANCG. Part of a BRCA complex containing BRCA1, BRCA2 and PALB2. Component of the homologous recombination repair (HR) complex composed of ERCC5/XPG, BRCA2, PALB2, DSS1 and RAD51. Within the complex, interacts with ERCC5/XPG and PALB2. Interacts directly with PALB2 which may serve as a scaffold for a HR complex containing PALB2, BRCA2, RAD51C, RAD51 and XRCC3. Interacts with BRCA1 only in the presence of PALB2 which serves as the bridging protein. Interacts with POLH; the interaction is direct. Interacts with the TREX-2 complex subunits PCID2 and SEM1. Interacts with HSF2BP and BRME1; the interaction with HSF2BP is direct and allows the formation of a ternary complex. The complex BRME1:HSF2BP:BRCA2 interacts with SPATA22, MEIOB and RAD51. Post-translationally, phosphorylated by ATM upon irradiation-induced DNA damage. Phosphorylation by CHEK1 and CHEK2 regulates interaction with RAD51. Phosphorylation at Ser-3291 by CDK1 and CDK2 is low in S phase when recombination is active, but increases as cells progress towards mitosis; this phosphorylation prevents homologous recombination-dependent repair during S phase and G2 by inhibiting RAD51 binding. In terms of processing, ubiquitinated in the absence of DNA damage; this does not lead to proteasomal degradation. In contrast, ubiquitination in response to DNA damage leads to proteasomal degradation. Highest levels of expression in breast and thymus, with slightly lower levels in lung, ovary and spleen.

It is found in the nucleus. Its subcellular location is the cytoplasm. It localises to the cytoskeleton. The protein localises to the microtubule organizing center. The protein resides in the centrosome. In terms of biological role, involved in double-strand break repair and/or homologous recombination. Binds RAD51 and potentiates recombinational DNA repair by promoting assembly of RAD51 onto single-stranded DNA (ssDNA). Acts by targeting RAD51 to ssDNA over double-stranded DNA, enabling RAD51 to displace replication protein-A (RPA) from ssDNA and stabilizing RAD51-ssDNA filaments by blocking ATP hydrolysis. Part of a PALB2-scaffolded HR complex containing RAD51C and which is thought to play a role in DNA repair by HR. May participate in S phase checkpoint activation. Binds selectively to ssDNA, and to ssDNA in tailed duplexes and replication fork structures. May play a role in the extension step after strand invasion at replication-dependent DNA double-strand breaks; together with PALB2 is involved in both POLH localization at collapsed replication forks and DNA polymerization activity. In concert with NPM1, regulates centrosome duplication. Interacts with the TREX-2 complex (transcription and export complex 2) subunits PCID2 and SEM1, and is required to prevent R-loop-associated DNA damage and thus transcription-associated genomic instability. Silencing of BRCA2 promotes R-loop accumulation at actively transcribed genes in replicating and non-replicating cells, suggesting that BRCA2 mediates the control of R-loop associated genomic instability, independently of its known role in homologous recombination. The protein is Breast cancer type 2 susceptibility protein of Homo sapiens (Human).